The following is an 81-amino-acid chain: Short neurotoxin 1 (81 aa).

Residues 1–21 (MKTLLLTLVVVTIVCLDLGYT) form the signal peptide. 4 disulfide bridges follow: C24/C43, C38/C60, C62/C73, and C74/C79.

Belongs to the three-finger toxin family. Short-chain subfamily. Type I alpha-neurotoxin sub-subfamily. As to expression, expressed by the venom gland.

The protein resides in the secreted. Its function is as follows. Binds to muscle nicotinic acetylcholine receptor (nAChR) and inhibit acetylcholine from binding to the receptor, thereby impairing neuromuscular transmission. The protein is Short neurotoxin 1 of Tropidechis carinatus (Australian rough-scaled snake).